A 326-amino-acid chain; its full sequence is Aspartate carbamoyltransferase catalytic subunit (326 aa).

2 residues coordinate carbamoyl phosphate: Arg60 and Thr61. Position 88 (Lys88) interacts with L-aspartate. Carbamoyl phosphate is bound by residues Arg110, His143, and Gln146. Residues Arg183 and Arg239 each contribute to the L-aspartate site. Carbamoyl phosphate contacts are provided by Gly280 and Pro281.

This sequence belongs to the aspartate/ornithine carbamoyltransferase superfamily. ATCase family. As to quaternary structure, heterododecamer (2C3:3R2) of six catalytic PyrB chains organized as two trimers (C3), and six regulatory PyrI chains organized as three dimers (R2).

It carries out the reaction carbamoyl phosphate + L-aspartate = N-carbamoyl-L-aspartate + phosphate + H(+). It functions in the pathway pyrimidine metabolism; UMP biosynthesis via de novo pathway; (S)-dihydroorotate from bicarbonate: step 2/3. Catalyzes the condensation of carbamoyl phosphate and aspartate to form carbamoyl aspartate and inorganic phosphate, the committed step in the de novo pyrimidine nucleotide biosynthesis pathway. This Microcystis aeruginosa (strain NIES-843 / IAM M-2473) protein is Aspartate carbamoyltransferase catalytic subunit.